A 233-amino-acid chain; its full sequence is Protein Mis18-alpha (233 aa).

Phosphoserine occurs at positions 36, 39, and 40. The 99-residue stretch at 80–178 (PLVFLCSGCR…SVEAIESYVL (99 aa)) folds into the Mis18 domain. Positions 85, 88, 141, and 144 each coordinate Zn(2+). K162 is covalently cross-linked (Glycyl lysine isopeptide (Lys-Gly) (interchain with G-Cter in SUMO2)). Position 233 is a phosphoserine (S233).

Belongs to the mis18 family. In terms of assembly, homodimer, and heterodimer with OIP5/MIS18B. Identified in a complex containing MIS18A, OIP5/MIS18B, MIS18BP1, RBBP7 and RBBP4. As to expression, detected in testis.

The protein resides in the nucleus. It is found in the chromosome. The protein localises to the centromere. Required for recruitment of CENPA to centromeres and normal chromosome segregation during mitosis. In Homo sapiens (Human), this protein is Protein Mis18-alpha (MIS18A).